Here is an 888-residue protein sequence, read N- to C-terminus: Mitogen-activated protein kinase kinase kinase 12 (888 aa).

Basic and acidic residues predominate over residues 26 to 42 (MRKLDPDTSDCTPEKDL). The interval 26–104 (MRKLDPDTSD…TGSPESRASR (79 aa)) is disordered. 2 positions are modified to phosphothreonine: Thr-37 and Thr-43. The segment covering 64–75 (SPSPGGEPPPEP) has biased composition (pro residues). The region spanning 158-399 (ILDLQWVGSG…FRQILLHLDI (242 aa)) is the Protein kinase domain. ATP is bound by residues 164-172 (VGSGAQGAV) and Lys-185. Catalysis depends on Asp-269, which acts as the Proton acceptor. 2 leucine-zipper regions span residues 423-444 (VKLH…EEEL) and 476-497 (LNAL…EQAL). The disordered stretch occupies residues 557–620 (GVGLPGCPKA…GGLGVGPTAW (64 aa)). Basic residues predominate over residues 572–584 (RSRRGKTRHRKAS). Residues 605 to 615 (GGLGSPGGLGV) are compositionally biased toward gly residues. Phosphoserine is present on Ser-640. 2 disordered regions span residues 654–731 (RGRG…YQHL) and 743–888 (TRSQ…SLPP). Gly residues predominate over residues 704-725 (PGEGVGLLGTGREGTTGRGGSR). A compositionally biased stretch (acidic residues) spans 752–763 (SEEEEGEVDSEV). 2 stretches are compositionally biased toward polar residues: residues 776–789 (NMRQ…SENP) and 798–812 (SEPS…GSTN). The segment covering 813–823 (TDERPDERSDD) has biased composition (basic and acidic residues).

The protein belongs to the protein kinase superfamily. STE Ser/Thr protein kinase family. MAP kinase kinase kinase subfamily. In terms of assembly, homodimer. Interacts with MBIP. The cofactor is Mg(2+). In terms of processing, autophosphorylated on Ser/Thr. Phosphorylated in cytosol under basal conditions and dephosphorylated when membrane-associated. Post-translationally, the activity of MAP3K12 can be regulated through its proteasomal degradation. APOE, through a receptor-mediated mechanism, activates MAP3K12 by preventing its proteasomal degradation.

The protein resides in the cytoplasm. Its subcellular location is the cell membrane. It carries out the reaction L-seryl-[protein] + ATP = O-phospho-L-seryl-[protein] + ADP + H(+). It catalyses the reaction L-threonyl-[protein] + ATP = O-phospho-L-threonyl-[protein] + ADP + H(+). Part of a non-canonical MAPK signaling pathway. Activated by APOE, enhances the AP-1-mediated transcription of APP, via a MAP kinase signal transduction pathway composed of MAP2K7 and MAPK1/ERK2 and MAPK3/ERK1. May be an activator of the JNK/SAPK pathway. The sequence is that of Mitogen-activated protein kinase kinase kinase 12 (Map3k12) from Rattus norvegicus (Rat).